Reading from the N-terminus, the 828-residue chain is E3 ubiquitin-protein ligase bre-1 (828 aa).

Positions 1 to 25 are disordered; sequence MMKRNNEGIGGEGVANSPPDDTQQK. An interaction with ubc-1 region spans residues 1–309; that stretch reads MMKRNNEGIG…SREIEALRAD (309 aa). Coiled-coil stretches lie at residues 53 to 92 and 185 to 251; these read QAAK…FLKV and HKEL…TEKQ. Positions 269–298 are enriched in low complexity; that stretch reads ASGNATASSSATLNQSEKKMGSPGSPPSES. The segment at 269–304 is disordered; the sequence is ASGNATASSSATLNQSEKKMGSPGSPPSESTSREIE. 3 coiled-coil regions span residues 311 to 345, 460 to 616, and 660 to 756; these read DEQA…KMET, VNTL…RNLK, and DEVL…NDSA. The RING-type zinc-finger motif lies at 776–815; the sequence is CPSCKTRPKDCIMLKCYHLFCETCIKTMYDTRQRKCPKCN.

It belongs to the BRE1 family. As to quaternary structure, interacts with ubc-1. Interacts with mrg-1.

The protein localises to the nucleus. The enzyme catalyses S-ubiquitinyl-[E2 ubiquitin-conjugating enzyme]-L-cysteine + [acceptor protein]-L-lysine = [E2 ubiquitin-conjugating enzyme]-L-cysteine + N(6)-ubiquitinyl-[acceptor protein]-L-lysine.. It functions in the pathway protein modification; protein ubiquitination. In terms of biological role, E3 ubiquitin-protein ligase that mediates monoubiquitination of 'Lys-117' of histone H2B. H2B 'Lys-117' ubiquitination gives a specific tag for epigenetic transcriptional activation and is also prerequisite for histone H3 'Lys-4' and 'Lys-79' methylation. Involved in regulating stem cell proliferative fate. This Caenorhabditis briggsae protein is E3 ubiquitin-protein ligase bre-1.